The chain runs to 333 residues: Adenosine deaminase (333 aa).

Residues H12 and H14 each coordinate Zn(2+). The substrate site is built by H14, D16, and G170. A Zn(2+)-binding site is contributed by H197. E200 functions as the Proton donor in the catalytic mechanism. D278 is a Zn(2+) binding site. D279 is a substrate binding site.

It belongs to the metallo-dependent hydrolases superfamily. Adenosine and AMP deaminases family. Adenosine deaminase subfamily. It depends on Zn(2+) as a cofactor.

It catalyses the reaction adenosine + H2O + H(+) = inosine + NH4(+). It carries out the reaction 2'-deoxyadenosine + H2O + H(+) = 2'-deoxyinosine + NH4(+). Catalyzes the hydrolytic deamination of adenosine and 2-deoxyadenosine. In Proteus mirabilis (strain HI4320), this protein is Adenosine deaminase.